A 576-amino-acid polypeptide reads, in one-letter code: Rho GTPase-activating protein gacP (576 aa).

Residues leucine 123 to aspartate 189 adopt a coiled-coil conformation. Positions glutamate 277 to phenylalanine 462 constitute a Rho-GAP domain. Residues valine 472–aspartate 576 are disordered. A compositionally biased stretch (low complexity) spans asparagine 482–serine 500. Residues alanine 501 to threonine 513 are compositionally biased toward polar residues. A compositionally biased stretch (low complexity) spans asparagine 514–asparagine 530. Residues serine 565–aspartate 576 are compositionally biased toward acidic residues.

The protein resides in the cytoplasm. In terms of biological role, rho GTPase-activating protein involved in the signal transduction pathway. This is Rho GTPase-activating protein gacP (gacP) from Dictyostelium discoideum (Social amoeba).